A 135-amino-acid chain; its full sequence is MHYTTLLLSTLLVGTALAQPTNPPAKTPKKAPKTQPYNPCKPQEVIDTKCMGPKDCLYPNPDSCTTYIQCVPLDEVGNAKPVVKPCPKGLQWNDNVGKKWCDYPNLSTCPVKTPQPKPKKGGVGGKKASVGHPGY.

Positions 1-18 (MHYTTLLLSTLLVGTALA) are cleaved as a signal peptide. Positions 19 to 29 (QPTNPPAKTPK) are excised as a propeptide. The segment at 19–39 (QPTNPPAKTPKKAPKTQPYNP) is disordered. The 65-residue stretch at 47-111 (DTKCMGPKDC…DYPNLSTCPV (65 aa)) folds into the Chitin-binding type-2 domain. Cysteines 86 and 101 form a disulfide. Residues 112–135 (KTPQPKPKKGGVGGKKASVGHPGY) form a disordered region.

Functionally, this necrosis-inducing peptide induces a hypersensitive response on Cf-4 tomato genotypes. Race-specific elicitors are compounds which only induce defense responses in genotypes of host plants which are resistant to the pathogenic race that produces the elicitor, but not in susceptible genotypes. The chain is Race-specific elicitor A4 (AVR4) from Passalora fulva (Tomato leaf mold).